Here is a 239-residue protein sequence, read N- to C-terminus: Leucine rich adaptor protein 1 (239 aa).

LRR repeat units follow at residues 55 to 83 (LGDK…LVTL) and 93 to 114 (LLEE…QYSL). The span at 107 to 116 (LTSSQYSLTG) shows a compositional bias: low complexity. Disordered regions lie at residues 107–139 (LTSS…TDRL) and 200–219 (KPPG…DESA). S118, S126, S129, and S213 each carry phosphoserine.

As to quaternary structure, forms a tripartite complex with CDC42BPA/CDC42BPB and MYO18A acting as an adapter connecting both. Its binding to CDC42BPA/CDC42BPB results in their activation by abolition of their negative autoregulation. Interacts with CDC42BPA and CDC42BPB.

The protein localises to the cytoplasm. In terms of biological role, acts as an activator of the canonical NF-kappa-B pathway and drive the production of pro-inflammatory cytokines. Promotes the antigen (Ag)-presenting and priming function of dendritic cells via the canonical NF-kappa-B pathway. In concert with MYO18A and CDC42BPA/CDC42BPB, is involved in modulating lamellar actomyosin retrograde flow that is crucial to cell protrusion and migration. Activates CDC42BPA/CDC42BPB and targets it to actomyosin through its interaction with MYO18A, leading to MYL9/MLC2 phosphorylation and MYH9/MYH10-dependent actomyosin assembly in the lamella. In Homo sapiens (Human), this protein is Leucine rich adaptor protein 1 (LURAP1).